Reading from the N-terminus, the 274-residue chain is Nitrogenase iron protein (274 aa).

Position 8–15 (8–15 (GKGGIGKS)) interacts with ATP. Cys-94 is a [4Fe-4S] cluster binding site. Arg-97 bears the ADP-ribosylarginine; by dinitrogenase reductase ADP-ribosyltransferase mark. Cys-131 contributes to the [4Fe-4S] cluster binding site.

The protein belongs to the NifH/BchL/ChlL family. As to quaternary structure, homodimer. The cofactor is [4Fe-4S] cluster. Post-translationally, the reversible ADP-ribosylation of Arg-97 inactivates the nitrogenase reductase and regulates nitrogenase activity.

The catalysed reaction is N2 + 8 reduced [2Fe-2S]-[ferredoxin] + 16 ATP + 16 H2O = H2 + 8 oxidized [2Fe-2S]-[ferredoxin] + 2 NH4(+) + 16 ADP + 16 phosphate + 6 H(+). Its function is as follows. The key enzymatic reactions in nitrogen fixation are catalyzed by the nitrogenase complex, which has 2 components: the iron protein and the molybdenum-iron protein. The polypeptide is Nitrogenase iron protein (Chlorobium phaeovibrioides (strain DSM 265 / 1930) (Prosthecochloris vibrioformis (strain DSM 265))).